A 249-amino-acid chain; its full sequence is Probable transcriptional regulatory protein HY04AAS1_0501 (249 aa).

It belongs to the TACO1 family.

Its subcellular location is the cytoplasm. In Hydrogenobaculum sp. (strain Y04AAS1), this protein is Probable transcriptional regulatory protein HY04AAS1_0501.